Consider the following 172-residue polypeptide: MTELFDTAVTSLLHLPEVLDRLGAAAGDRRSAGDHAHHAAHGHGQHRISGIGGGAPVDIMETPGEYAFVLDVPGLSKSDIQVTLEEDRVLVMKSSNGAGNGKRKREEEEGECKYIRLERRASPRAFARKFRLPEDADTGGISARCENGVLTVTVKKRPPPEKKTKSVQVTIA.

The tract at residues 29 to 54 is disordered; the sequence is RRSAGDHAHHAAHGHGQHRISGIGGG. The region spanning 48 to 172 is the sHSP domain; sequence ISGIGGGAPV…KTKSVQVTIA (125 aa).

This sequence belongs to the small heat shock protein (HSP20) family. As to quaternary structure, may form oligomeric structures.

It is found in the cytoplasm. The chain is 18.6 kDa class III heat shock protein (HSP18.6) from Oryza sativa subsp. japonica (Rice).